Here is a 402-residue protein sequence, read N- to C-terminus: uncharacterized protein (402 aa).

The segment at 332–402 is disordered; it reads MFSSSSSSSE…PEPPPGKPGR (71 aa). Over residues 370–379 the composition is skewed to polar residues; sequence SETTSLQQYS. Positions 393-402 are enriched in pro residues; sequence PEPPPGKPGR.

This is an uncharacterized protein from Mus musculus (Mouse).